Consider the following 336-residue polypeptide: Palmitoyltransferase PFA3 (336 aa).

Residues 1–6 are Cytoplasmic-facing; sequence MNDRLS. Residues 7-29 traverse the membrane as a helical segment; that stretch reads LTSLFPRCLTTCLYIWTAYITLT. Residues 30–37 are Vacuolar-facing; it reads RIHQIPRW. Residues 38–58 form a helical membrane-spanning segment; it reads FLALTIVPTLAVALYTYYKVI. Residues 59-147 are Cytoplasmic-facing; the sequence is ARGPGSPLDF…AECTGFRNQK (89 aa). Residues 104–154 form the DHHC domain; sequence RVCQVCHVWKPDRCHHCSSCDVCILKMDHHCPWFAECTGFRNQKFFIQFLM. The helical transmembrane segment at 148–168 threads the bilayer; sequence FFIQFLMYTTLYAFLVLIYTC. Over 169 to 188 the chain is Vacuolar; it reads YELGTWFNSGSFNRELIDFH. A helical membrane pass occupies residues 189–209; that stretch reads LLGVALLAVAVFISVLAFTCF. Residues 210–336 lie on the Cytoplasmic side of the membrane; the sequence is SIYQVCKNQT…RASVEIIDAN (127 aa).

It belongs to the DHHC palmitoyltransferase family. PFA3 subfamily. Autopalmitoylated.

Its subcellular location is the vacuole membrane. It carries out the reaction L-cysteinyl-[protein] + hexadecanoyl-CoA = S-hexadecanoyl-L-cysteinyl-[protein] + CoA. In terms of biological role, palmitoyltransferase specific for VAC8. Palmitoylates VAC8 at one or more of its N-terminal cysteine residues, which is required for its proper membrane localization. This chain is Palmitoyltransferase PFA3 (PFA3), found in Saccharomyces cerevisiae (strain ATCC 204508 / S288c) (Baker's yeast).